The sequence spans 578 residues: Arginine--tRNA ligase (578 aa).

Residues 127-137 carry the 'HIGH' region motif; that stretch reads PNLAKEMHVGH.

The protein belongs to the class-I aminoacyl-tRNA synthetase family. Monomer.

The protein localises to the cytoplasm. The enzyme catalyses tRNA(Arg) + L-arginine + ATP = L-arginyl-tRNA(Arg) + AMP + diphosphate. This is Arginine--tRNA ligase from Pseudomonas putida (strain ATCC 47054 / DSM 6125 / CFBP 8728 / NCIMB 11950 / KT2440).